The chain runs to 291 residues: Small ribosomal subunit biogenesis GTPase RsgA (291 aa).

Residues 63-221 (QNELKRPPVS…VADTPGFSAL (159 aa)) form the CP-type G domain. Residues 112–115 (TKKD) and 164–172 (GQSGVGKST) contribute to the GTP site. Residues C245, C250, H252, and C258 each contribute to the Zn(2+) site.

This sequence belongs to the TRAFAC class YlqF/YawG GTPase family. RsgA subfamily. In terms of assembly, monomer. Associates with 30S ribosomal subunit, binds 16S rRNA. Zn(2+) is required as a cofactor.

The protein localises to the cytoplasm. One of several proteins that assist in the late maturation steps of the functional core of the 30S ribosomal subunit. Helps release RbfA from mature subunits. May play a role in the assembly of ribosomal proteins into the subunit. Circularly permuted GTPase that catalyzes slow GTP hydrolysis, GTPase activity is stimulated by the 30S ribosomal subunit. The sequence is that of Small ribosomal subunit biogenesis GTPase RsgA from Staphylococcus carnosus (strain TM300).